The sequence spans 349 residues: GDSL esterase/lipase At2g19060 (349 aa).

A signal peptide spans 1–25 (MADKMFKALLWAFATAVVMAEAVRG). Serine 37 (nucleophile) is an active-site residue. N-linked (GlcNAc...) asparagine glycosylation occurs at asparagine 178. Residues aspartate 317 and histidine 320 contribute to the active site.

This sequence belongs to the 'GDSL' lipolytic enzyme family.

It localises to the secreted. The sequence is that of GDSL esterase/lipase At2g19060 from Arabidopsis thaliana (Mouse-ear cress).